The primary structure comprises 166 residues: Telethonin (166 aa).

Residue Ser-39 is modified to Phosphoserine. The interval 145-166 (VSKPGTLRRSLSRSMSQEAQRG) is disordered. The span at 156–166 (SRSMSQEAQRG) shows a compositional bias: polar residues.

Interacts with MYOZ1, MYOZ2 and MYOZ3. Interacts with CSRP3. Interacts directly with the N-terminal Ig-like domains of 2 titin (TTN) molecules. Interacts with ANKRD2; the interaction is direct.

Its subcellular location is the cytoplasm. The protein localises to the myofibril. It is found in the sarcomere. Functionally, muscle assembly regulating factor. Mediates the antiparallel assembly of titin (TTN) molecules at the sarcomeric Z-disk. The sequence is that of Telethonin (TCAP) from Bos taurus (Bovine).